Here is a 93-residue protein sequence, read N- to C-terminus: Small ribosomal subunit protein uS19m (93 aa).

Belongs to the universal ribosomal protein uS19 family. As to quaternary structure, component of the mitochondrial small ribosomal subunit (mt-SSU). Mature yeast 74S mitochondrial ribosomes consist of a small (37S) and a large (54S) subunit. The 37S small subunit contains a 15S ribosomal RNA (15S mt-rRNA) and at least 32 different proteins. The 54S large subunit contains a 21S rRNA (21S mt-rRNA) and at least 45 different proteins.

Its subcellular location is the mitochondrion. In terms of biological role, component of the mitochondrial ribosome (mitoribosome), a dedicated translation machinery responsible for the synthesis of mitochondrial genome-encoded proteins, including at least some of the essential transmembrane subunits of the mitochondrial respiratory chain. The mitoribosomes are attached to the mitochondrial inner membrane and translation products are cotranslationally integrated into the membrane. This is Small ribosomal subunit protein uS19m (rsm19) from Schizosaccharomyces pombe (strain 972 / ATCC 24843) (Fission yeast).